A 96-amino-acid chain; its full sequence is Small ribosomal subunit protein bS6 (96 aa).

It belongs to the bacterial ribosomal protein bS6 family.

In terms of biological role, binds together with bS18 to 16S ribosomal RNA. The sequence is that of Small ribosomal subunit protein bS6 from Streptococcus thermophilus (strain ATCC BAA-491 / LMD-9).